A 549-amino-acid polypeptide reads, in one-letter code: Putative acyl-CoA synthetase YngI (549 aa).

ATP is bound by residues 198-206 (TSGTTGFPK), D423, R438, and K529.

The protein belongs to the ATP-dependent AMP-binding enzyme family.

The protein is Putative acyl-CoA synthetase YngI (yngI) of Bacillus subtilis (strain 168).